The sequence spans 1013 residues: Tolloid-like protein 1 (1013 aa).

A signal peptide spans 1–30 (MGLQALSPRMLLWLVVSGIVFSRVLWVCAG). The propeptide occupies 31 to 147 (LDYDYTFDGN…EQSEKNRVPR (117 aa)). The disordered stretch occupies residues 124-150 (QNNTMKGKAPPKLSEQSEKNRVPRAAT). The Peptidase M12A domain maps to 148-347 (AATSRTERIW…AQARKLYRCP (200 aa)). N-linked (GlcNAc...) asparagine glycosylation occurs at Asn-169. 4 disulfide bridges follow: Cys-190–Cys-346, Cys-210–Cys-232, Cys-212–Cys-213, and Cys-349–Cys-375. His-240 contributes to the Zn(2+) binding site. Residue Glu-241 is part of the active site. 2 residues coordinate Zn(2+): His-244 and His-250. 2 consecutive CUB domains span residues 349-461 (CGET…YEAI) and 462-574 (CGGE…FFKE). Residues Asn-359 and Asn-390 are each glycosylated (N-linked (GlcNAc...) asparagine). Disulfide bonds link Cys-402/Cys-424, Cys-462/Cys-488, Cys-515/Cys-537, Cys-578/Cys-590, Cys-586/Cys-599, Cys-601/Cys-614, Cys-618/Cys-644, Cys-671/Cys-693, Cys-734/Cys-745, Cys-741/Cys-754, Cys-756/Cys-769, Cys-774/Cys-800, Cys-827/Cys-849, Cys-887/Cys-917, and Cys-944/Cys-966. Residues 574–615 (EEDECAKPDRGGCEQRCLNTLGSYQCACEPGYELGPDRRSCE) enclose the EGF-like 1; calcium-binding domain. The 113-residue stretch at 618–730 (CGGLLTKLNG…KGFKAHFFSD (113 aa)) folds into the CUB 3 domain. Asn-626 carries an N-linked (GlcNAc...) asparagine glycan. The EGF-like 2; calcium-binding domain maps to 730 to 770 (DKDECSKDNGGCQHECVNTMGSYTCQCRNGFVLHENKHDCK). 2 consecutive CUB domains span residues 774-886 (CEQK…HSTE) and 887-1003 (CGGR…YKSI).

Zn(2+) is required as a cofactor. As to expression, highly expressed in brain and kidney and weakly in lung, skeletal muscle. A perceptible level of expression is observed in heart and testis.

The protein resides in the secreted. Protease which processes procollagen C-propeptides, such as chordin, pro-biglycan and pro-lysyl oxidase. Required for the embryonic development, especially heart development. Predominant protease, which in the development, influences dorsal-ventral patterning and skeletogenesis. This chain is Tolloid-like protein 1 (Tll1), found in Mus musculus (Mouse).